The primary structure comprises 329 residues: Cathepsin K (329 aa).

A signal peptide spans 1 to 15 (MWGLKVLLLPVVSFA). A propeptide spans 16 to 114 (LHPEEILDTQ…TLYIPDWEGR (99 aa)) (activation peptide). N-linked (GlcNAc...) asparagine glycosylation occurs at Asn-103. Intrachain disulfides connect Cys-136/Cys-177 and Cys-170/Cys-210. Residue Cys-139 is part of the active site. N-linked (GlcNAc...) asparagine glycosylation is present at Asn-268. Residues Cys-269 and Cys-318 are joined by a disulfide bond. Active-site residues include His-276 and Asn-296.

This sequence belongs to the peptidase C1 family. Predominantly expressed in osteclasts (bones).

Its subcellular location is the lysosome. It localises to the secreted. It is found in the apical cell membrane. It catalyses the reaction Broad proteolytic activity. With small-molecule substrates and inhibitors, the major determinant of specificity is P2, which is preferably Leu, Met &gt; Phe, and not Arg.. Functionally, thiol protease involved in osteoclastic bone resorption and may participate partially in the disorder of bone remodeling. Displays potent endoprotease activity against fibrinogen at acid pH. May play an important role in extracellular matrix degradation. Involved in the release of thyroid hormone thyroxine (T4) by limited proteolysis of TG/thyroglobulin in the thyroid follicle lumen. In Oryctolagus cuniculus (Rabbit), this protein is Cathepsin K (CTSK).